Reading from the N-terminus, the 334-residue chain is Large ribosomal subunit protein uL3 (334 aa).

The segment covering 1-10 (MGMKKNRPRR) has biased composition (basic residues). Residues 1–21 (MGMKKNRPRRGSLAFSPRKRA) form a disordered region.

The protein belongs to the universal ribosomal protein uL3 family. In terms of assembly, part of the 50S ribosomal subunit. Forms a cluster with proteins L14 and L24e.

One of the primary rRNA binding proteins, it binds directly near the 3'-end of the 23S rRNA, where it nucleates assembly of the 50S subunit. The sequence is that of Large ribosomal subunit protein uL3 from Methanococcus maripaludis (strain C5 / ATCC BAA-1333).